Reading from the N-terminus, the 153-residue chain is Membrane-spanning 4-domains subfamily A member 13 (153 aa).

Transmembrane regions (helical) follow at residues 1 to 21, 36 to 56, 71 to 91, and 111 to 131; these read MTGI…MGQI, GCSL…RATW, ILCM…LSTF, and VLLS…IFGC.

The protein belongs to the MS4A family.

Its subcellular location is the membrane. May be involved in signal transduction as a component of a multimeric receptor complex. The sequence is that of Membrane-spanning 4-domains subfamily A member 13 (MS4A13) from Bos taurus (Bovine).